The chain runs to 375 residues: Enoyl-[acyl-carrier-protein] reductase, mitochondrial (375 aa).

Residues 1 to 37 (MAALMESVVGRALKFSSTANFRSIRRGETPTLCIKSF) constitute a mitochondrion transit peptide. Residue Tyr-96 is the Proton donor of the active site. NADP(+)-binding positions include Asn-169, 195 to 198 (TSIV), 218 to 220 (RDR), 287 to 290 (YGGM), 312 to 314 (FWL), and Lys-370.

The protein belongs to the zinc-containing alcohol dehydrogenase family. Quinone oxidoreductase subfamily. Homodimer.

Its subcellular location is the mitochondrion. It catalyses the reaction a 2,3-saturated acyl-[ACP] + NADP(+) = a (2E)-enoyl-[ACP] + NADPH + H(+). Functionally, catalyzes the NADPH-dependent reduction of trans-2-enoyl thioesters in mitochondrial fatty acid synthesis (fatty acid synthesis type II). Fatty acid chain elongation in mitochondria uses acyl carrier protein (ACP) as an acyl group carrier, but the enzyme accepts both ACP and CoA thioesters as substrates in vitro. This Arabidopsis thaliana (Mouse-ear cress) protein is Enoyl-[acyl-carrier-protein] reductase, mitochondrial.